Reading from the N-terminus, the 390-residue chain is Large ribosomal subunit protein uL3y (390 aa).

The disordered stretch occupies residues 1 to 36; that stretch reads MSHRKFEHPRHGSLGFLPRKRASRHRGKVKAFPKDD. A compositionally biased stretch (basic residues) spans 18–31; that stretch reads PRKRASRHRGKVKA.

This sequence belongs to the universal ribosomal protein uL3 family.

It is found in the cytoplasm. This chain is Large ribosomal subunit protein uL3y (ARP2), found in Arabidopsis thaliana (Mouse-ear cress).